A 524-amino-acid chain; its full sequence is GMP synthase [glutamine-hydrolyzing] (524 aa).

The region spanning 9–207 (RILILDFGSQ…VIHICQCIPN (199 aa)) is the Glutamine amidotransferase type-1 domain. The active-site Nucleophile is cysteine 86. Active-site residues include histidine 181 and glutamate 183. The GMPS ATP-PPase domain maps to 208–399 (WTTKHIIEDS…LGLPADLIYR (192 aa)). 235 to 241 (SGGVDSA) is a binding site for ATP.

As to quaternary structure, homodimer.

It catalyses the reaction XMP + L-glutamine + ATP + H2O = GMP + L-glutamate + AMP + diphosphate + 2 H(+). Its pathway is purine metabolism; GMP biosynthesis; GMP from XMP (L-Gln route): step 1/1. Functionally, catalyzes the synthesis of GMP from XMP. The polypeptide is GMP synthase [glutamine-hydrolyzing] (Coxiella burnetii (strain RSA 331 / Henzerling II)).